The following is a 354-amino-acid chain: Uroporphyrinogen decarboxylase (354 aa).

Substrate contacts are provided by residues 28–32 (RQAGR), Asp-78, Tyr-155, Ser-210, and His-325.

This sequence belongs to the uroporphyrinogen decarboxylase family. Homodimer.

The protein localises to the cytoplasm. It catalyses the reaction uroporphyrinogen III + 4 H(+) = coproporphyrinogen III + 4 CO2. Its pathway is porphyrin-containing compound metabolism; protoporphyrin-IX biosynthesis; coproporphyrinogen-III from 5-aminolevulinate: step 4/4. Its function is as follows. Catalyzes the decarboxylation of four acetate groups of uroporphyrinogen-III to yield coproporphyrinogen-III. The sequence is that of Uroporphyrinogen decarboxylase from Crocosphaera subtropica (strain ATCC 51142 / BH68) (Cyanothece sp. (strain ATCC 51142)).